Consider the following 267-residue polypeptide: Trehalose 2-sulfotransferase (267 aa).

Alpha,alpha-trehalose-binding positions include glutamine 14, 33 to 39, proline 48, and tryptophan 53; that span reads EPQEFFQ. The active-site Proton acceptor is glutamate 36.

It belongs to the Stf0 sulfotransferase family. Homodimer.

The catalysed reaction is alpha,alpha-trehalose + 3'-phosphoadenylyl sulfate = 2-O-sulfo-alpha,alpha-trehalose + adenosine 3',5'-bisphosphate + H(+). Its pathway is glycolipid metabolism. Functionally, catalyzes the sulfuryl group transfer from 3'-phosphoadenosine-5'-phosphosulfate (PAPS) to trehalose, leading to trehalose-2-sulfate (T2S). The sulfation of trehalose is the first step in the biosynthesis of sulfolipid-1 (SL-1), a major cell wall glycolipid in pathogenic mycobacteria. Cannot use free glucose and unnatural stereoisomers of trehalose (alpha,beta (neo-trehalose) and beta,beta (iso-trehalose)) as substrates. This is Trehalose 2-sulfotransferase from Mycolicibacterium smegmatis (strain ATCC 700084 / mc(2)155) (Mycobacterium smegmatis).